The following is a 235-amino-acid chain: Probable transcriptional regulatory protein MPN_478 (235 aa).

Belongs to the TACO1 family.

Its subcellular location is the cytoplasm. The polypeptide is Probable transcriptional regulatory protein MPN_478 (Mycoplasma pneumoniae (strain ATCC 29342 / M129 / Subtype 1) (Mycoplasmoides pneumoniae)).